We begin with the raw amino-acid sequence, 511 residues long: Histidine ammonia-lyase (511 aa).

The 5-imidazolinone (Ala-Gly) cross-link spans 143–145 (ASG). S144 bears the 2,3-didehydroalanine (Ser) mark.

The protein belongs to the PAL/histidase family. Post-translationally, contains an active site 4-methylidene-imidazol-5-one (MIO), which is formed autocatalytically by cyclization and dehydration of residues Ala-Ser-Gly.

Its subcellular location is the cytoplasm. It catalyses the reaction L-histidine = trans-urocanate + NH4(+). It functions in the pathway amino-acid degradation; L-histidine degradation into L-glutamate; N-formimidoyl-L-glutamate from L-histidine: step 1/3. The protein is Histidine ammonia-lyase of Vibrio parahaemolyticus serotype O3:K6 (strain RIMD 2210633).